Consider the following 279-residue polypeptide: Acetylglutamate kinase (279 aa).

Residues 64–65 (GG), Arg86, and Asn177 contribute to the substrate site.

Belongs to the acetylglutamate kinase family. ArgB subfamily.

The protein localises to the cytoplasm. It carries out the reaction N-acetyl-L-glutamate + ATP = N-acetyl-L-glutamyl 5-phosphate + ADP. Its pathway is amino-acid biosynthesis; L-arginine biosynthesis; N(2)-acetyl-L-ornithine from L-glutamate: step 2/4. Its function is as follows. Catalyzes the ATP-dependent phosphorylation of N-acetyl-L-glutamate. The polypeptide is Acetylglutamate kinase (Campylobacter jejuni subsp. doylei (strain ATCC BAA-1458 / RM4099 / 269.97)).